A 351-amino-acid chain; its full sequence is Transmembrane protein 255A (351 aa).

4 helical membrane passes run 30 to 50, 57 to 77, 89 to 109, and 226 to 246; these read IYVT…GLAA, VTVG…LGII, LVAS…CAIV, and TILN…LGGF. Positions 302–331 are disordered; sequence FPSSPPSGLSDEQEPQSPSPSPSYMWSSSA.

The protein belongs to the TMEM255 family.

The protein resides in the membrane. The chain is Transmembrane protein 255A (Tmem255a) from Rattus norvegicus (Rat).